Consider the following 490-residue polypeptide: Thyroid hormone receptor alpha (490 aa).

A disordered region spans residues 1–32 (MEQKPSKVECGSDPEENSARSPDGKRKRKNGQ). Residues 1–52 (MEQKPSKVECGSDPEENSARSPDGKRKRKNGQCSLKTSMSGYIPSYLDKDEQ) are modulating. Zn(2+)-binding residues include cysteine 53, cysteine 56, cysteine 70, cysteine 73, cysteine 91, cysteine 97, cysteine 107, and cysteine 110. 2 consecutive NR C4-type zinc fingers follow at residues 53–73 (CVVC…CEGC) and 91–115 (CKYD…FKKC). The segment at residues 53-127 (CVVCGDKATG…VGMAMDLVLD (75 aa)) is a DNA-binding region (nuclear receptor). The region spanning 163–407 (EEWDLIHIAT…EGQQLLGMHV (245 aa)) is the NR LBD domain. 2 residues coordinate 3,3',5-triiodo-L-thyronine: arginine 228 and serine 277. The interval 457-490 (AVCGEDDSSEADSPSSSEEEPEVCEDLAGNAASP) is disordered.

The protein belongs to the nuclear hormone receptor family. NR1 subfamily. In terms of assembly, binds DNA as a dimer; homodimer and heterodimer with RXRB. Interacts with NCOA3 and NCOA6 coactivators, leading to a strong increase of transcription of target genes. Probably interacts with SFPQ. Interacts with C1D. Interacts with AKAP13. Interacts with TP53INP2. Interacts with PER2. Isoform alpha-2 and isoform alpha-1 interact with TACC1, but the interaction with alpha-1 is weaker. The interaction with isoform alpha-1, but not alpha-2, is decreased in the presence of thyroid hormone T3.

The protein resides in the nucleus. It localises to the cytoplasm. Nuclear hormone receptor that can act as a repressor or activator of transcription. High affinity receptor for thyroid hormones, including triiodothyronine and thyroxine. In terms of biological role, does not bind thyroid hormone and functions as a weak dominant negative inhibitor of thyroid hormone action. The protein is Thyroid hormone receptor alpha (THRA) of Homo sapiens (Human).